The sequence spans 1127 residues: Collagen alpha-2(I) chain (1127 aa).

Residues 1-16 are compositionally biased toward pro residues; that stretch reads DGKPGLPGPAGPPGPP. Residues 1 to 1017 are disordered; the sequence is DGKPGLPGPA…GPAGPAGGGY (1017 aa). Composition is skewed to low complexity over residues 171–191, 221–230, and 237–258; these read AGPA…AAGP, EPGPNGAVGP, and PGNN…AGAP. Over residues 260-270 the composition is skewed to pro residues; that stretch reads FPGPRGGPGPQ. Residues 272–282 show a composition bias toward low complexity; the sequence is PQGAAGQRGLA. A compositionally biased stretch (gly residues) spans 289 to 298; sequence GVKGDGGPKG. Composition is skewed to low complexity over residues 326-345, 355-398, 436-449, and 461-473; these read ATGP…RGMP, AAGP…AGPA, APGP…TGAT, and QGAA…QGLP. Positions 474-483 are enriched in gly residues; the sequence is GPAGGAGEAG. The segment covering 508-518 has biased composition (low complexity); that stretch reads NPGAAGASGPQ. Residues 531-568 show a composition bias toward gly residues; the sequence is GTDGGKGEPGAAGAAGGPGHQGPGGMPGERGAAGGPGG. Over residues 569-580 the composition is skewed to basic and acidic residues; it reads KGEKGEAGHRGP. Composition is skewed to low complexity over residues 611 to 625 and 634 to 647; these read SGSF…ARGA and PAGA…PGAD. Residues 657–666 are compositionally biased toward gly residues; that stretch reads GPSGGKGESG. Low complexity-rich tracts occupy residues 667–692, 703–730, and 758–778; these read PSGP…TGAR, FPGA…PAGK, and SGEK…PLGL. A compositionally biased stretch (gly residues) spans 792–801; that stretch reads GSPGGAGAVG. Low complexity-rich tracts occupy residues 802-824 and 860-872; these read EAGR…LGLP and PGSS…AGAP. Residues 876-897 are compositionally biased toward gly residues; the sequence is GPSGGAGRPGNRGESGPGGAAG. Low complexity predominate over residues 898-913; that stretch reads AVGPAGARGAAGPSGP. The span at 914 to 928 shows a compositional bias: basic and acidic residues; the sequence is RGEKGVAGEKGERGM. 2 stretches are compositionally biased toward low complexity: residues 937–956 and 986–997; these read LQGM…AGPN and PGARGPPGYVGP. Pro residues predominate over residues 998–1010; sequence AGPPGXPGLPGPA. Residues 1093 to 1127 form the Fibrillar collagen NC1 domain; the sequence is RTNKPSRLPLLDLAPLDLGGADQEFGLDLGPVCFK.

It belongs to the fibrillar collagen family.

It localises to the secreted. The protein resides in the extracellular space. It is found in the extracellular matrix. This chain is Collagen alpha-2(I) chain, found in Epinephelus marginatus (Dusky grouper).